Reading from the N-terminus, the 188-residue chain is Elongation factor P (188 aa).

It belongs to the elongation factor P family.

It is found in the cytoplasm. It participates in protein biosynthesis; polypeptide chain elongation. Functionally, involved in peptide bond synthesis. Stimulates efficient translation and peptide-bond synthesis on native or reconstituted 70S ribosomes in vitro. Probably functions indirectly by altering the affinity of the ribosome for aminoacyl-tRNA, thus increasing their reactivity as acceptors for peptidyl transferase. The chain is Elongation factor P from Pseudomonas aeruginosa (strain LESB58).